The following is a 516-amino-acid chain: D-alanine--D-alanyl carrier protein ligase (516 aa).

156–157 (TS) is a binding site for ATP. A D-alanine-binding site is contributed by Asp203. An ATP-binding site is contributed by 298–303 (NAYGPT). Val307 contributes to the D-alanine binding site. Residues Asp389, 401–404 (YGGR), and Lys503 each bind ATP. Residue Lys503 coordinates D-alanine.

It belongs to the ATP-dependent AMP-binding enzyme family. DltA subfamily.

The protein localises to the cytoplasm. It catalyses the reaction holo-[D-alanyl-carrier protein] + D-alanine + ATP = D-alanyl-[D-alanyl-carrier protein] + AMP + diphosphate. It participates in cell wall biogenesis; lipoteichoic acid biosynthesis. Catalyzes the first step in the D-alanylation of lipoteichoic acid (LTA), the activation of D-alanine and its transfer onto the D-alanyl carrier protein (Dcp) DltC. In an ATP-dependent two-step reaction, forms a high energy D-alanyl-AMP intermediate, followed by transfer of the D-alanyl residue as a thiol ester to the phosphopantheinyl prosthetic group of the Dcp. D-alanylation of LTA plays an important role in modulating the properties of the cell wall in Gram-positive bacteria, influencing the net charge of the cell wall. This is D-alanine--D-alanyl carrier protein ligase from Streptococcus pneumoniae (strain ATCC 700669 / Spain 23F-1).